We begin with the raw amino-acid sequence, 217 residues long: Adenylate kinase (217 aa).

Residue glycine 10–threonine 15 coordinates ATP. The tract at residues serine 30–valine 59 is NMP. AMP contacts are provided by residues threonine 31, arginine 36, aspartate 57–valine 59, glycine 85–arginine 88, and glutamine 92. The interval glycine 126–aspartate 163 is LID. Arginine 127 provides a ligand contact to ATP. Residues cysteine 130 and cysteine 133 each coordinate Zn(2+). ATP is bound at residue threonine 136–tyrosine 137. Zn(2+)-binding residues include cysteine 150 and cysteine 153. AMP contacts are provided by arginine 160 and arginine 171. Glutamine 199 lines the ATP pocket.

The protein belongs to the adenylate kinase family. Monomer.

It localises to the cytoplasm. The enzyme catalyses AMP + ATP = 2 ADP. The protein operates within purine metabolism; AMP biosynthesis via salvage pathway; AMP from ADP: step 1/1. In terms of biological role, catalyzes the reversible transfer of the terminal phosphate group between ATP and AMP. Plays an important role in cellular energy homeostasis and in adenine nucleotide metabolism. The sequence is that of Adenylate kinase from Geobacillus thermodenitrificans (strain NG80-2).